We begin with the raw amino-acid sequence, 482 residues long: tRNA sulfurtransferase (482 aa).

The 105-residue stretch at 61–165 (AEVLEILTHT…GDKLNQVLAR (105 aa)) folds into the THUMP domain. ATP is bound by residues 183 to 184 (LI), Lys-265, Gly-287, and Gln-296. A disulfide bridge connects residues Cys-344 and Cys-456. Residues 404–482 (VEEHAVVLDI…GFNNVKVYRP (79 aa)) enclose the Rhodanese domain. Catalysis depends on Cys-456, which acts as the Cysteine persulfide intermediate.

It belongs to the ThiI family.

The protein resides in the cytoplasm. It carries out the reaction [ThiI sulfur-carrier protein]-S-sulfanyl-L-cysteine + a uridine in tRNA + 2 reduced [2Fe-2S]-[ferredoxin] + ATP + H(+) = [ThiI sulfur-carrier protein]-L-cysteine + a 4-thiouridine in tRNA + 2 oxidized [2Fe-2S]-[ferredoxin] + AMP + diphosphate. It catalyses the reaction [ThiS sulfur-carrier protein]-C-terminal Gly-Gly-AMP + S-sulfanyl-L-cysteinyl-[cysteine desulfurase] + AH2 = [ThiS sulfur-carrier protein]-C-terminal-Gly-aminoethanethioate + L-cysteinyl-[cysteine desulfurase] + A + AMP + 2 H(+). It participates in cofactor biosynthesis; thiamine diphosphate biosynthesis. Its function is as follows. Catalyzes the ATP-dependent transfer of a sulfur to tRNA to produce 4-thiouridine in position 8 of tRNAs, which functions as a near-UV photosensor. Also catalyzes the transfer of sulfur to the sulfur carrier protein ThiS, forming ThiS-thiocarboxylate. This is a step in the synthesis of thiazole, in the thiamine biosynthesis pathway. The sulfur is donated as persulfide by IscS. The protein is tRNA sulfurtransferase of Vibrio parahaemolyticus serotype O3:K6 (strain RIMD 2210633).